The sequence spans 64 residues: UPF0434 protein Bcen_1934 (64 aa).

This sequence belongs to the UPF0434 family.

This chain is UPF0434 protein Bcen_1934, found in Burkholderia orbicola (strain AU 1054).